A 114-amino-acid chain; its full sequence is uncharacterized protein (114 aa).

A helical transmembrane segment spans residues 7 to 27 (YIFSFWFFFLVEYVVTFRLFL). Positions 90-114 (KNSPEKKKFKRGLPISSKYTDGKKR) are disordered.

The protein localises to the membrane. This is an uncharacterized protein from Saccharomyces cerevisiae (strain ATCC 204508 / S288c) (Baker's yeast).